The primary structure comprises 470 residues: Cysteine--tRNA ligase (470 aa).

Cys-30 contacts Zn(2+). The 'HIGH' region signature appears at 32 to 42; that stretch reads PTVYNYIHIGN. Zn(2+)-binding residues include Cys-211, His-236, and Glu-240. The 'KMSKS' region signature appears at 268 to 272; sequence KMSKS. Lys-271 lines the ATP pocket.

The protein belongs to the class-I aminoacyl-tRNA synthetase family. As to quaternary structure, monomer. Zn(2+) is required as a cofactor.

The protein localises to the cytoplasm. It catalyses the reaction tRNA(Cys) + L-cysteine + ATP = L-cysteinyl-tRNA(Cys) + AMP + diphosphate. The polypeptide is Cysteine--tRNA ligase (Fervidobacterium nodosum (strain ATCC 35602 / DSM 5306 / Rt17-B1)).